The primary structure comprises 111 residues: MMKGGMAGLMKQAQQMQEKMQKMQEELANAEVTGQSGGGLVSVVMTGRHDVKRVSIDQSLMSTDEDDKEVLEDLIAAALNDAVRKVEQSSQEKMGGMTAGMQLPPGFKMPF.

Disordered regions lie at residues 1-25 (MMKGGMAGLMKQAQQMQEKMQKMQE) and 87-111 (EQSSQEKMGGMTAGMQLPPGFKMPF).

Belongs to the YbaB/EbfC family. In terms of assembly, homodimer.

It localises to the cytoplasm. Its subcellular location is the nucleoid. Binds to DNA and alters its conformation. May be involved in regulation of gene expression, nucleoid organization and DNA protection. This is Nucleoid-associated protein PputGB1_3833 from Pseudomonas putida (strain GB-1).